A 137-amino-acid polypeptide reads, in one-letter code: ATP synthase epsilon chain (137 aa).

Belongs to the ATPase epsilon chain family. In terms of assembly, F-type ATPases have 2 components, CF(1) - the catalytic core - and CF(0) - the membrane proton channel. CF(1) has five subunits: alpha(3), beta(3), gamma(1), delta(1), epsilon(1). CF(0) has three main subunits: a, b and c.

It is found in the cellular thylakoid membrane. Produces ATP from ADP in the presence of a proton gradient across the membrane. The chain is ATP synthase epsilon chain from Nostoc punctiforme (strain ATCC 29133 / PCC 73102).